A 325-amino-acid chain; its full sequence is Ribosomal RNA small subunit methyltransferase H (325 aa).

S-adenosyl-L-methionine is bound by residues 42–44 (GGH), Asp62, Phe86, Asp105, and Gln112.

Belongs to the methyltransferase superfamily. RsmH family.

It localises to the cytoplasm. The enzyme catalyses cytidine(1402) in 16S rRNA + S-adenosyl-L-methionine = N(4)-methylcytidine(1402) in 16S rRNA + S-adenosyl-L-homocysteine + H(+). Functionally, specifically methylates the N4 position of cytidine in position 1402 (C1402) of 16S rRNA. This Cupriavidus metallidurans (strain ATCC 43123 / DSM 2839 / NBRC 102507 / CH34) (Ralstonia metallidurans) protein is Ribosomal RNA small subunit methyltransferase H.